A 1003-amino-acid chain; its full sequence is Trifunctional purine biosynthetic protein adenosine-3 (1003 aa).

Residues 111 to 318 enclose the ATP-grasp domain; it reads KSFLDRHGIP…LYEVMQAVIN (208 aa). ATP is bound by residues 190–193, E197, R220, and N229; that span reads EELL. Positions 214–235 are disordered; the sequence is PAQDHKRLKDGDEGPNTGGMGA. A compositionally biased stretch (basic and acidic residues) spans 216–225; it reads QDHKRLKDGD. E288 and N290 together coordinate Mg(2+). Residues 434–805 are AIRS domain; it reads GLTYKNSGVD…QGKIQTNKVK (372 aa). A GART domain region spans residues 806-1003; sequence VAVLISGTGT…VGEAGKICWK (198 aa). 814–816 provides a ligand contact to N(1)-(5-phospho-beta-D-ribosyl)glycinamide; the sequence is GTN. (6R)-10-formyltetrahydrofolate contacts are provided by residues R867, 892-895, and N909; that span reads MRIL. H911 functions as the Proton donor in the catalytic mechanism. 943–947 provides a ligand contact to (6R)-10-formyltetrahydrofolate; sequence AEEVD. 973–976 is a N(1)-(5-phospho-beta-D-ribosyl)glycinamide binding site; the sequence is KEAE.

It in the N-terminal section; belongs to the GARS family. This sequence in the central section; belongs to the AIR synthase family. The protein in the C-terminal section; belongs to the GART family. As to quaternary structure, homodimer. Mg(2+) is required as a cofactor. Requires Mn(2+) as cofactor.

It carries out the reaction 5-phospho-beta-D-ribosylamine + glycine + ATP = N(1)-(5-phospho-beta-D-ribosyl)glycinamide + ADP + phosphate + H(+). The catalysed reaction is 2-formamido-N(1)-(5-O-phospho-beta-D-ribosyl)acetamidine + ATP = 5-amino-1-(5-phospho-beta-D-ribosyl)imidazole + ADP + phosphate + H(+). It catalyses the reaction N(1)-(5-phospho-beta-D-ribosyl)glycinamide + (6R)-10-formyltetrahydrofolate = N(2)-formyl-N(1)-(5-phospho-beta-D-ribosyl)glycinamide + (6S)-5,6,7,8-tetrahydrofolate + H(+). It functions in the pathway purine metabolism; IMP biosynthesis via de novo pathway; 5-amino-1-(5-phospho-D-ribosyl)imidazole from N(2)-formyl-N(1)-(5-phospho-D-ribosyl)glycinamide: step 2/2. It participates in purine metabolism; IMP biosynthesis via de novo pathway; N(1)-(5-phospho-D-ribosyl)glycinamide from 5-phospho-alpha-D-ribose 1-diphosphate: step 2/2. Its pathway is purine metabolism; IMP biosynthesis via de novo pathway; N(2)-formyl-N(1)-(5-phospho-D-ribosyl)glycinamide from N(1)-(5-phospho-D-ribosyl)glycinamide (10-formyl THF route): step 1/1. Its function is as follows. Trifunctional enzyme that catalyzes three distinct reactions as part of the 'de novo' inosine monophosphate biosynthetic pathway. The chain is Trifunctional purine biosynthetic protein adenosine-3 (GART) from Gallus gallus (Chicken).